Consider the following 297-residue polypeptide: Acetyl-coenzyme A carboxylase carboxyl transferase subunit beta (297 aa).

Residues 1–23 (MSWIERILGRTSSSSSSSKSKVP) form a disordered region. The CoA carboxyltransferase N-terminal domain maps to 26 to 295 (VWTKCTSCEQ…PFKTAELIVE (270 aa)). Zn(2+) is bound by residues C30, C33, C49, and C52. Residues 30–52 (CTSCEQVLYSEELKRNMHVCPKC) form a C4-type zinc finger.

This sequence belongs to the AccD/PCCB family. As to quaternary structure, acetyl-CoA carboxylase is a heterohexamer composed of biotin carboxyl carrier protein (AccB), biotin carboxylase (AccC) and two subunits each of ACCase subunit alpha (AccA) and ACCase subunit beta (AccD). The cofactor is Zn(2+).

The protein localises to the cytoplasm. The enzyme catalyses N(6)-carboxybiotinyl-L-lysyl-[protein] + acetyl-CoA = N(6)-biotinyl-L-lysyl-[protein] + malonyl-CoA. It functions in the pathway lipid metabolism; malonyl-CoA biosynthesis; malonyl-CoA from acetyl-CoA: step 1/1. Its function is as follows. Component of the acetyl coenzyme A carboxylase (ACC) complex. Biotin carboxylase (BC) catalyzes the carboxylation of biotin on its carrier protein (BCCP) and then the CO(2) group is transferred by the transcarboxylase to acetyl-CoA to form malonyl-CoA. This is Acetyl-coenzyme A carboxylase carboxyl transferase subunit beta from Actinobacillus pleuropneumoniae serotype 5b (strain L20).